The following is a 251-amino-acid chain: MILYEYPFNERIRTLLRLEDLFERFTFFVAQEDAREHHVALTTLFEISEVAGRADLKSDLMKELERQRQTLAPFRGNPGIEQNALEAVLGEIEQTLANLAQMQGKTGQHLIDNEWLASIRSRAVIPGGTCKFDLPSYYAWQQWPAEQRRHDIAKWAMPLLPLRDAAMIVLRLARESGQASKVMAMQGSYQQMLSGRTYQLMQVRVPPELRVIPEASANKYMLWVRFTAQDGDVRPRAVDIDVPFQLTLCNL.

Belongs to the ZapD family. In terms of assembly, interacts with FtsZ.

Its subcellular location is the cytoplasm. Functionally, cell division factor that enhances FtsZ-ring assembly. Directly interacts with FtsZ and promotes bundling of FtsZ protofilaments, with a reduction in FtsZ GTPase activity. This chain is Cell division protein ZapD, found in Burkholderia mallei (strain NCTC 10247).